The following is a 208-amino-acid chain: Imidazole glycerol phosphate synthase subunit HisH (208 aa).

Residues 1–206 (MIVIIDYDTG…KEVIRSCKSS (206 aa)) form the Glutamine amidotransferase type-1 domain. Catalysis depends on Cys-79, which acts as the Nucleophile. Catalysis depends on residues His-181 and Glu-183.

As to quaternary structure, heterodimer of HisH and HisF.

Its subcellular location is the cytoplasm. It carries out the reaction 5-[(5-phospho-1-deoxy-D-ribulos-1-ylimino)methylamino]-1-(5-phospho-beta-D-ribosyl)imidazole-4-carboxamide + L-glutamine = D-erythro-1-(imidazol-4-yl)glycerol 3-phosphate + 5-amino-1-(5-phospho-beta-D-ribosyl)imidazole-4-carboxamide + L-glutamate + H(+). It catalyses the reaction L-glutamine + H2O = L-glutamate + NH4(+). The protein operates within amino-acid biosynthesis; L-histidine biosynthesis; L-histidine from 5-phospho-alpha-D-ribose 1-diphosphate: step 5/9. Functionally, IGPS catalyzes the conversion of PRFAR and glutamine to IGP, AICAR and glutamate. The HisH subunit catalyzes the hydrolysis of glutamine to glutamate and ammonia as part of the synthesis of IGP and AICAR. The resulting ammonia molecule is channeled to the active site of HisF. This chain is Imidazole glycerol phosphate synthase subunit HisH, found in Listeria monocytogenes serotype 4b (strain CLIP80459).